Here is a 394-residue protein sequence, read N- to C-terminus: Phosphatidylinositol 4-phosphate 5-kinase-like protein 1 (394 aa).

One can recognise a PIPK domain in the interval 36–393 (DKQSRLGLFE…RLCQWVEAHT (358 aa)).

As to quaternary structure, heterodimerizes with other type I phosphatidylinositol 4-phosphate 5-kinase.

It localises to the cytoplasm. Its subcellular location is the membrane. The catalysed reaction is a 1,2-diacyl-sn-glycero-3-phospho-(1D-myo-inositol 4-phosphate) + ATP = a 1,2-diacyl-sn-glycero-3-phospho-(1D-myo-inositol-4,5-bisphosphate) + ADP + H(+). In terms of biological role, may act as a scaffold to localize and regulate type I PI(4)P 5-kinases to specific compartments within the cell, where they generate PI(4,5)P2 for actin nucleation, signaling and scaffold protein recruitment and conversion to PI(3,4,5)P3. The polypeptide is Phosphatidylinositol 4-phosphate 5-kinase-like protein 1 (PIP5KL1) (Homo sapiens (Human)).